A 324-amino-acid polypeptide reads, in one-letter code: N-acetyl-gamma-glutamyl-phosphate reductase (324 aa).

Cysteine 131 is a catalytic residue.

Belongs to the NAGSA dehydrogenase family. Type 1 subfamily.

The protein localises to the cytoplasm. The enzyme catalyses N-acetyl-L-glutamate 5-semialdehyde + phosphate + NADP(+) = N-acetyl-L-glutamyl 5-phosphate + NADPH + H(+). It participates in amino-acid biosynthesis; L-arginine biosynthesis; N(2)-acetyl-L-ornithine from L-glutamate: step 3/4. In terms of biological role, catalyzes the NADPH-dependent reduction of N-acetyl-5-glutamyl phosphate to yield N-acetyl-L-glutamate 5-semialdehyde. In Bradyrhizobium sp. (strain BTAi1 / ATCC BAA-1182), this protein is N-acetyl-gamma-glutamyl-phosphate reductase.